A 240-amino-acid polypeptide reads, in one-letter code: MSKPKYNRVVLKLSGEALAGEQGFGINPAVIKSVAEQVKEIAELDVEVAVVVGGGNIWRGKIGSEMGMDRAGADYMGMLATVMNSLALQDSLENIGIQTRVQTSIEMRQVAEPYIRRKAVRHLEKKRVVIFAAGTGNPYFSTDTTAALRAAEIEADVILMAKNNVDGVYNADPSIDPTATKYETLTYLDVLKEGLGVMDSTASSLCMDNDIPLIVFSVMEKGNIKRAVLGENIGTVVRGK.

An ATP-binding site is contributed by 12–15 (KLSG). The interval 20 to 25 (GEQGFG) is involved in allosteric activation by GTP. UMP is bound at residue Gly54. ATP contacts are provided by Gly55 and Arg59. Residues Asp74 and 135-142 (TGNPYFST) each bind UMP. ATP is bound by residues Asn163, Tyr169, and Asp172.

The protein belongs to the UMP kinase family. In terms of assembly, homohexamer.

Its subcellular location is the cytoplasm. The enzyme catalyses UMP + ATP = UDP + ADP. It participates in pyrimidine metabolism; CTP biosynthesis via de novo pathway; UDP from UMP (UMPK route): step 1/1. Its activity is regulated as follows. Allosterically activated by GTP. Inhibited by UTP. In terms of biological role, catalyzes the reversible phosphorylation of UMP to UDP. The protein is Uridylate kinase of Bacillus anthracis.